The following is a 359-amino-acid chain: Photosystem II protein D1 3 (359 aa).

3 consecutive transmembrane segments (helical) span residues 29-46 (YVGW…AATI), 118-133 (HFLI…EWEL), and 142-156 (WICV…AASA). Residue H118 coordinates chlorophyll a. Y126 is a pheophytin a binding site. [CaMn4O5] cluster contacts are provided by D170 and E189. Residues 197 to 218 (FHMLGVAGVFGGSLFSAMHGSL) traverse the membrane as a helical segment. H198 lines the chlorophyll a pocket. Residues H215 and 264 to 265 (SF) contribute to the a quinone site. H215 lines the Fe cation pocket. Residue H272 participates in Fe cation binding. The helical transmembrane segment at 274–288 (FLAAWPVVGIWFTAL) threads the bilayer. The [CaMn4O5] cluster site is built by H332, E333, D342, and A344. The propeptide occupies 345–359 (AAESTPVALQVPAIG).

It belongs to the reaction center PufL/M/PsbA/D family. As to quaternary structure, PSII is composed of 1 copy each of membrane proteins PsbA, PsbB, PsbC, PsbD, PsbE, PsbF, PsbH, PsbI, PsbJ, PsbK, PsbL, PsbM, PsbT, PsbX, PsbY, PsbZ, Psb30/Ycf12, peripheral proteins PsbO, CyanoQ (PsbQ), PsbU, PsbV and a large number of cofactors. It forms dimeric complexes. The D1/D2 heterodimer binds P680, chlorophylls that are the primary electron donor of PSII, and subsequent electron acceptors. It shares a non-heme iron and each subunit binds pheophytin, quinone, additional chlorophylls, carotenoids and lipids. D1 provides most of the ligands for the Mn4-Ca-O5 cluster of the oxygen-evolving complex (OEC). There is also a Cl(-1) ion associated with D1 and D2, which is required for oxygen evolution. The PSII complex binds additional chlorophylls, carotenoids and specific lipids. is required as a cofactor. Tyr-161 forms a radical intermediate that is referred to as redox-active TyrZ, YZ or Y-Z. In terms of processing, C-terminally processed by CtpA; processing is essential to allow assembly of the oxygen-evolving complex and thus photosynthetic growth.

It localises to the cellular thylakoid membrane. The catalysed reaction is 2 a plastoquinone + 4 hnu + 2 H2O = 2 a plastoquinol + O2. Functionally, photosystem II (PSII) is a light-driven water:plastoquinone oxidoreductase that uses light energy to abstract electrons from H(2)O, generating O(2) and a proton gradient subsequently used for ATP formation. It consists of a core antenna complex that captures photons, and an electron transfer chain that converts photonic excitation into a charge separation. The D1/D2 (PsbA/PsbD) reaction center heterodimer binds P680, the primary electron donor of PSII as well as several subsequent electron acceptors. This chain is Photosystem II protein D1 3, found in Parasynechococcus marenigrum (strain WH8102).